A 406-amino-acid polypeptide reads, in one-letter code: MIAVNSRNSLNADMTSLHPETLMVHGGMKGLTEAGVHVPAIDLSTTNPVNDVATGGDSYEWLATGHTLKDGDSAVYQRLWQPGVARFETALAGLEHAEEAVAFATGMAAMTAALLAAVSAGTPHIVAVRPLYGGSDHLLETGLLGTTVTWAKEADIASAIQDDTGLVIVETPANPSLDLVDLDSVVSAAGNVPVLVDNTFCTPVLQQPISHGAALVLHSATKYLGGHGDAMGGIIATNADWAMRLRQVRAITGALLHPMGAYLLHRGLRTLAVRMRAAQTTAGELAERLDAHPAISVVHYPGLKGQDPRGLLGRQMSGGGAMIAMELAGGFDAARSFVEHCNLVVHAVSLGGADTLIQHPASLTHRPVAATAKPGDGLIRLSVGLEHVDDLADDLIAALDASRAAA.

Pyridoxal 5'-phosphate-binding positions include 76–78 and 106–107; these read YQR and GM. An L-homocysteine-binding site is contributed by Tyr-132. 219–221 contributes to the pyridoxal 5'-phosphate binding site; the sequence is SAT. The residue at position 222 (Lys-222) is an N6-(pyridoxal phosphate)lysine. L-homocysteine is bound at residue Arg-380. Arg-380 is a binding site for L-methionine.

Belongs to the trans-sulfuration enzymes family. L-methionine gamma-lyase subfamily. Homotetramer. The cofactor is pyridoxal 5'-phosphate.

The catalysed reaction is L-methionine + H2O = methanethiol + 2-oxobutanoate + NH4(+). It carries out the reaction L-homocysteine + H2O = 2-oxobutanoate + hydrogen sulfide + NH4(+) + H(+). With respect to regulation, is inhibited in vitro by carbonyl reagents, completely inactivated by DL-propargylglycine, and unaffected by metal-chelating agents. In terms of biological role, catalyzes the alpha,gamma-elimination of L-methionine to produce methanethiol, 2-oxobutanoate and ammonia. May be responsible for the production of methanethiol associated with desirable Cheddar-type sulfur notes during cheese ripening. Is also able to catalyze the alpha,gamma-elimination of L-homocysteine and DL-selenomethionine, but has no activity toward L-cysteine, L-cystathionine, S-adenosyl-L-homocysteine and D-methionine. The sequence is that of L-methionine gamma-lyase from Brevibacterium aurantiacum.